A 638-amino-acid chain; its full sequence is tRNA uridine 5-carboxymethylaminomethyl modification enzyme MnmG (638 aa).

Residues 15-20 (GAGHAG), Ile-127, and Ser-182 each bind FAD. 276–290 (GPRYCPSIEDKIVRF) is an NAD(+) binding site. Gln-373 is a binding site for FAD.

It belongs to the MnmG family. As to quaternary structure, homodimer. Heterotetramer of two MnmE and two MnmG subunits. The cofactor is FAD.

Its subcellular location is the cytoplasm. Functionally, NAD-binding protein involved in the addition of a carboxymethylaminomethyl (cmnm) group at the wobble position (U34) of certain tRNAs, forming tRNA-cmnm(5)s(2)U34. This is tRNA uridine 5-carboxymethylaminomethyl modification enzyme MnmG from Streptococcus suis (strain 98HAH33).